A 92-amino-acid polypeptide reads, in one-letter code: Small ribosomal subunit protein bS18B (92 aa).

Belongs to the bacterial ribosomal protein bS18 family. In terms of assembly, part of the 30S ribosomal subunit. Forms a tight heterodimer with protein bS6.

Its function is as follows. Binds as a heterodimer with protein bS6 to the central domain of the 16S rRNA, where it helps stabilize the platform of the 30S subunit. The protein is Small ribosomal subunit protein bS18B of Cupriavidus pinatubonensis (strain JMP 134 / LMG 1197) (Cupriavidus necator (strain JMP 134)).